Here is a 47-residue protein sequence, read N- to C-terminus: Gas vesicle protein A (47 aa).

Belongs to the gas vesicle GvpA family. As to quaternary structure, the gas vesicle shell is 2 nm thick and consists of a single layer of this protein. It forms helical ribs nearly perpendicular to the long axis of the vesicle.

It is found in the gas vesicle shell. Gas vesicles are hollow, gas filled proteinaceous nanostructures found in some microorganisms. During planktonic growth they allow positioning of the organism at a favorable depth for light or nutrient acquisition. GvpA forms the protein shell. The sequence is that of Gas vesicle protein A from Dactylococcopsis salina (Myxobaktron salinum).